The following is a 363-amino-acid chain: MTVSYGAPGRVNLIGEHTDYNLGFALPIALPRRTVVTFTPEHTGAITARSDRADGSARIPLDTTPGQVTGWAAYAAGAIWALRGAGHPVPGGAMSITSDVEIGSGLSSSAALIGAVLGAVGAATGTRIDRLERARLAQRAENDYVGAPTGLLDHLAALFGAPKTALLIDFRDITVRPVAFDPDACDVVLLLMDSRARHCHAGGEYALRRASCERAAADLGVSSLRAVQDRGLAALGAIADPIDARRARHVLTENQRVLDFAAALADSDFTAAGQLLTASHESMREDFAITTERIDLIAESAVRAGALGARMTGGGFGGAVIALVPADRARDVADTVRRAAVTAGYDEPAVSRTYAAPGAAECR.

16–19 contacts substrate; sequence EHTD. Residues S50 and 103-109 each bind ATP; that span reads GSGLSSS. Mg(2+) is bound by residues S109 and E141. The active-site Proton acceptor is D153. Y205 is a binding site for substrate.

The protein belongs to the GHMP kinase family. GalK subfamily.

It is found in the cytoplasm. It carries out the reaction alpha-D-galactose + ATP = alpha-D-galactose 1-phosphate + ADP + H(+). It participates in carbohydrate metabolism; galactose metabolism. Functionally, catalyzes the transfer of the gamma-phosphate of ATP to D-galactose to form alpha-D-galactose-1-phosphate (Gal-1-P). The chain is Galactokinase from Mycobacterium tuberculosis (strain ATCC 25177 / H37Ra).